A 185-amino-acid polypeptide reads, in one-letter code: Elongation factor P (185 aa).

This sequence belongs to the elongation factor P family.

The protein localises to the cytoplasm. The protein operates within protein biosynthesis; polypeptide chain elongation. Functionally, involved in peptide bond synthesis. Stimulates efficient translation and peptide-bond synthesis on native or reconstituted 70S ribosomes in vitro. Probably functions indirectly by altering the affinity of the ribosome for aminoacyl-tRNA, thus increasing their reactivity as acceptors for peptidyl transferase. The chain is Elongation factor P from Acaryochloris marina (strain MBIC 11017).